The sequence spans 935 residues: Progesterone receptor (935 aa).

Residues 1-50 (MTELKAKGPRAPHVAGSPSSPKVGSPLPCSQAAGPFPGSQTSDTLPEASA) form a disordered region. Positions 1–164 (MTELKAKGPR…PATQRVLSPL (164 aa)) are AF3; mediates transcriptional activation. The interval 1 to 568 (MTELKAKGPR…YSFESLPQKI (568 aa)) is modulating, Pro-Rich. Ser-20 bears the Phosphoserine mark. The short motif at 55 to 59 (LDGLL) is the LXXL motif 1 element. The tract at residues 62-159 (RICQGQDPTD…DPPAAPATQR (98 aa)) is disordered. Phosphoserine is present on Ser-81. An LXXL motif 2 motif is present at residues 115–119 (LDTLW). Phosphoserine is present on residues Ser-130 and Ser-162. Positions 165 to 305 (MSRSGGKAGD…LATTVTDFIH (141 aa)) are mediates transcriptional transrepression. A Nuclear localization signal motif is present at residues 183-187 (KVLPR). Positions 185–252 (LPRGLSPSRQ…ALGGAAAGGG (68 aa)) are disordered. Ser-190 carries the post-translational modification Phosphoserine. Residues 191–203 (PSRQLLLPTSGSP) are compositionally biased toward polar residues. Position 213 is a phosphoserine (Ser-213). Positions 220–231 (EVEEEDGSESED) are enriched in acidic residues. A compositionally biased stretch (low complexity) spans 232–246 (SAGPLLKGKPRALGG). Residue Ser-294 is modified to Phosphoserine; by MAPK1. Residues 331 to 365 (GGAGAASAFAPPRSSPSASSTPVPGGDFPDCAYAP) are disordered. Over residues 335–356 (AASAFAPPRSSPSASSTPVPGG) the composition is skewed to low complexity. Ser-345 is subject to Phosphoserine; by MAPK. A Glycyl lysine isopeptide (Lys-Gly) (interchain with G-Cter in SUMO); alternate cross-link involves residue Lys-388. Residue Lys-388 forms a Glycyl lysine isopeptide (Lys-Gly) (interchain with G-Cter in ubiquitin); alternate linkage. Residue Ser-400 is modified to Phosphoserine; by CDK2. The disordered stretch occupies residues 415–452 (PDFPLGPPPSLPPRAPPPRPGEAAVTAAPASASVSSAS). Pro residues predominate over residues 418–434 (PLGPPPSLPPRAPPPRP). Residues 435–452 (GEAAVTAAPASASVSSAS) show a composition bias toward low complexity. An AF1; mediates transcriptional activation region spans residues 456–548 (STLECILYKA…VYPPYLNYLR (93 aa)). A Glycyl lysine isopeptide (Lys-Gly) (interchain with G-Cter in SUMO) cross-link involves residue Lys-533. NR C4-type zinc fingers lie at residues 569–589 (CLIC…CGSC) and 605–629 (CAGR…LRKC). A DNA-binding region (nuclear receptor) is located at residues 569–641 (CLICGDEASG…AGMVLGGRKF (73 aa)). Ser-678 is subject to Phosphoserine. In terms of domain architecture, NR LBD spans 681–915 (QDIQLIPPLI…EFPEMMSEVI (235 aa)). The segment at 689–935 (LINLLLSIEP…MVKPLLFHKK (247 aa)) is AF2; mediates transcriptional activation.

It belongs to the nuclear hormone receptor family. As to quaternary structure, interacts with SMARD1 and UNC45A. Interacts with CUEDC2; the interaction promotes ubiquitination, decreases sumoylation, and represses transcriptional activity. Interacts with PIAS3; the interaction promotes sumoylation of PR in a hormone-dependent manner, inhibits DNA-binding, and alters nuclear export. Interacts with SP1; the interaction requires ligand-induced phosphorylation on Ser-344 by ERK1/2-MAPK. Interacts with PRMT2. Interacts with NCOA2 and NCOA1. Interacts with KLF9. Interacts with GTF2B. In terms of processing, phosphorylated on multiple serine sites. Several of these sites are hormone-dependent. Phosphorylation on Ser-294 is highly hormone-dependent and modulates ubiquitination and sumoylation on Lys-388. Phosphorylation on Ser-345 requires induction by hormone. Basal phosphorylation on Ser-81, Ser-162, Ser-190 and Ser-400 is increased in response to progesterone and can be phosphorylated in vitro by the CDK2-A1 complex. Increased levels of phosphorylation on Ser-400 also in the presence of EGF, heregulin, IGF, PMA and FBS. Phosphorylation at this site by CDK2 is ligand-independent, and increases nuclear translocation and transcriptional activity. Phosphorylation at Ser-162 and Ser-294, but not at Ser-190, is impaired during the G(2)/M phase of the cell cycle. Phosphorylation on Ser-345 by ERK1/2 MAPK is required for interaction with SP1. Post-translationally, sumoylation is hormone-dependent and represses transcriptional activity. Sumoylation on all three sites is enhanced by PIAS3. Desumoylated by SENP1. Sumoylation on Lys-388, the main site of sumoylation, is repressed by ubiquitination on the same site, and modulated by phosphorylation at Ser-294. Ubiquitination is hormone-dependent and represses sumoylation on the same site. Promoted by MAPK-mediated phosphorylation on Ser-294. In terms of processing, palmitoylated by ZDHHC7 and ZDHHC21. Palmitoylation is required for plasma membrane targeting and for rapid intracellular signaling via ERK and AKT kinases and cAMP generation.

The protein resides in the nucleus. It is found in the cytoplasm. The steroid hormones and their receptors are involved in the regulation of eukaryotic gene expression and affect cellular proliferation and differentiation in target tissues. Transcriptional activator of several progesteron-dependent promoters in a variety of cell types. Involved in activation of SRC-dependent MAPK signaling on hormone stimulation. The protein is Progesterone receptor (PGR) of Pithecia irrorata (Gray monk saki).